A 631-amino-acid polypeptide reads, in one-letter code: PTS system beta-glucoside-specific EIIBCA component (631 aa).

A PTS EIIB type-1 domain is found at 1–86 (MNYETLASEI…LSLDGMARFS (86 aa)). The active-site Phosphocysteine intermediate; for EIIB activity is cysteine 26. One can recognise a PTS EIIC type-1 domain in the interval 105 to 466 (DIISSIFTPF…DETQPAAADS (362 aa)). Helical transmembrane passes span 120–140 (ATGI…ISES), 146–166 (LLFA…GYTA), 175–195 (FTTL…AFNA), 206–226 (FLGI…ILFA), 248–268 (FFTP…LIGP), 295–315 (VMGA…FVPL), 328–348 (LLPL…GVLL), 358–378 (IAGS…VYGV), 385–405 (PFIF…YAHT), and 434–454 (AVIG…SFGV). The region spanning 501–605 (DRTFASGVMG…DLTTPIVITN (105 aa)) is the PTS EIIA type-1 domain. The Tele-phosphohistidine intermediate; for EIIA activity role is filled by histidine 553.

The protein localises to the cell inner membrane. Its function is as follows. The phosphoenolpyruvate-dependent sugar phosphotransferase system (sugar PTS), a major carbohydrate active -transport system, catalyzes the phosphorylation of incoming sugar substrates concomitantly with their translocation across the cell membrane. This system is involved in beta-glucoside transport. Functionally, acts both as a kinase and as a phosphatase on ArbG. In Dickeya chrysanthemi (Pectobacterium chrysanthemi), this protein is PTS system beta-glucoside-specific EIIBCA component (arbF).